Reading from the N-terminus, the 89-residue chain is Small ribosomal subunit protein uS15 (89 aa).

This sequence belongs to the universal ribosomal protein uS15 family. In terms of assembly, part of the 30S ribosomal subunit. Forms a bridge to the 50S subunit in the 70S ribosome, contacting the 23S rRNA.

In terms of biological role, one of the primary rRNA binding proteins, it binds directly to 16S rRNA where it helps nucleate assembly of the platform of the 30S subunit by binding and bridging several RNA helices of the 16S rRNA. Functionally, forms an intersubunit bridge (bridge B4) with the 23S rRNA of the 50S subunit in the ribosome. The polypeptide is Small ribosomal subunit protein uS15 (Aliivibrio salmonicida (strain LFI1238) (Vibrio salmonicida (strain LFI1238))).